Here is a 181-residue protein sequence, read N- to C-terminus: Large ribosomal subunit protein uL5 (181 aa).

Belongs to the universal ribosomal protein uL5 family. In terms of assembly, part of the 50S ribosomal subunit; part of the 5S rRNA/L5/L18/L25 subcomplex. Contacts the 5S rRNA and the P site tRNA. Forms a bridge to the 30S subunit in the 70S ribosome.

In terms of biological role, this is one of the proteins that bind and probably mediate the attachment of the 5S RNA into the large ribosomal subunit, where it forms part of the central protuberance. In the 70S ribosome it contacts protein S13 of the 30S subunit (bridge B1b), connecting the 2 subunits; this bridge is implicated in subunit movement. Contacts the P site tRNA; the 5S rRNA and some of its associated proteins might help stabilize positioning of ribosome-bound tRNAs. This Helicobacter pylori (strain Shi470) protein is Large ribosomal subunit protein uL5.